The sequence spans 509 residues: Protein OS-9 homolog (509 aa).

An N-terminal signal peptide occupies residues 1-23 (MRRQSRIVASLLVLACASSGAFA). Residues 64–74 (SPDLNDISEQT) are compositionally biased toward polar residues. A disordered region spans residues 64-91 (SPDLNDISEQTPLKDESEESIRDGSSGE). Residues 75–91 (PLKDESEESIRDGSSGE) show a composition bias toward basic and acidic residues. Asn120 carries an N-linked (GlcNAc...) asparagine glycan. An MRH domain is found at 151-291 (GKCLYYISGW…LIYTPRLCND (141 aa)). An intrachain disulfide couples Cys153 to Cys166. Residues Trp160, Trp161, Gln173, Asp246, Arg252, Glu273, and Tyr279 each coordinate a mannooligosaccharide derivative. 2 disulfides stabilise this stretch: Cys245-Cys277 and Cys260-Cys289. Residues 433 to 509 (GVVDTDEDEE…GSEEIFKDEL (77 aa)) are disordered. A compositionally biased stretch (acidic residues) spans 436–451 (DTDEDEEDGYENEEGE). Residues 452–461 (TDKREQRENT) show a composition bias toward basic and acidic residues. The segment covering 489–502 (RSEDGEDPDVDGSE) has biased composition (acidic residues). A Prevents secretion from ER motif is present at residues 506 to 509 (KDEL).

It belongs to the OS-9 family. Interacts with missfolded ER lumenal proteins.

Its subcellular location is the endoplasmic reticulum membrane. In terms of biological role, lectin involved in the quality control of the secretory pathway. As a member of the endoplasmic reticulum-associated degradation lumenal (ERAD-L) surveillance system, targets misfolded endoplasmic reticulum lumenal glycoproteins for degradation. The chain is Protein OS-9 homolog (yos9) from Emericella nidulans (strain FGSC A4 / ATCC 38163 / CBS 112.46 / NRRL 194 / M139) (Aspergillus nidulans).